We begin with the raw amino-acid sequence, 66 residues long: Large ribosomal subunit protein bL35 (66 aa).

Basic residues predominate over residues 1–16 (MPKQKTHRASAKRFKR). Residues 1–20 (MPKQKTHRASAKRFKRTGSG) form a disordered region.

Belongs to the bacterial ribosomal protein bL35 family.

In Streptococcus thermophilus (strain CNRZ 1066), this protein is Large ribosomal subunit protein bL35.